The primary structure comprises 461 residues: BSD domain-containing protein 1 (461 aa).

Residues serine 123 and serine 197 each carry the phosphoserine modification. In terms of domain architecture, BSD spans 177 to 229; that stretch reads WLSQFCLEEKKGEISELLVGSPSIRALYTKMVPAAVSHSEFWHRYFYKVHQLE. The interval 239–384 is disordered; the sequence is KQRAEQSISE…SGPEPRPPAR (146 aa). Residues 250–259 show a composition bias toward acidic residues; that stretch reads PGWEEEEEEL. Low complexity predominate over residues 295 to 318; sequence LVTPVEPPTEVTPSESSESVSLVT. Threonine 387 carries the phosphothreonine modification. A disordered region spans residues 398-430; sequence VFELNSDSGKSTPSNNGKKGSSTDISEDWEKDF. The segment covering 402 to 421 has biased composition (polar residues); sequence NSDSGKSTPSNNGKKGSSTD. Serine 418, serine 419, and serine 449 each carry phosphoserine.

In Bos taurus (Bovine), this protein is BSD domain-containing protein 1 (BSDC1).